We begin with the raw amino-acid sequence, 239 residues long: DNA repair protein RecO (239 aa).

This sequence belongs to the RecO family.

Its function is as follows. Involved in DNA repair and RecF pathway recombination. This is DNA repair protein RecO from Christiangramia forsetii (strain DSM 17595 / CGMCC 1.15422 / KT0803) (Gramella forsetii).